Here is a 208-residue protein sequence, read N- to C-terminus: MAEEAQYEYLVPLEKYLSAGVRLGTRLSNKYLEERGFIYAVRPDGLRIFDIKKIDERLRIAAKLIARYPPDRVLVHTTRPYGFKPVQMFCKFVGCKALTGRFIPGMLTNPNLSNYLEVDLLFVVDPRLDSQAVAEAAKMGIPVVALVDTDTPHQYIDFMIPCNNKGRKSLALIFWVLARQVLRERGELKPDQDLPVPPEEFETRLVQT.

It belongs to the universal ribosomal protein uS2 family.

In Pyrobaculum calidifontis (strain DSM 21063 / JCM 11548 / VA1), this protein is Small ribosomal subunit protein uS2.